A 765-amino-acid chain; its full sequence is MYIIMNDFNGDDFNGDDFHSKTQHLNKLFNLIKSNKEKEFMDYINQLTPDQIDINIRDENGNYMIFFAIIMNSSTILKKLIKYGARLDVFDTEGNSVMYYPIKFGYYEIIDVLIDYDSKIIGISLINIKDHKGSVPLFYAIKYRNKYALQQLLSKDANANYRNNDNVNALHMAVLKKDISMVKLVIKHIKNLNARTRQGSTALHYACNFQLYDITKLLLDNGADQNIIELELDFYPIFYSVIQNDINISKLLVDYGANPNHQDYEGNTILHYCVIYNHMEIFDYIMNNYVIRCRSSDLYIEDINSKADIPRDHIDPNVVNLDGLTVVHLMLYDYKEEYDNFLKKLIPYCNLNYQDNTGNTILHLIAENNIWNKFDNLLNVKKLNIFIRNNNGKTVLDMIQVRYREIFIDTIVKSYYNYLNKYDNGWLLQWQNECSGSNLSEISEKKCLELIRNDVVNNKISLPTKKNKKSITIINDEIVHFSTFTGSLIDTVSGFKYLTKKYPKAASLIIDNQEITSDLQNYYQSIGIQINISQNIVQFEIKWIYQKIFMPIEFENTMQQIILSNKYKYIIFPISIILSSGNHSNGLFYDLEKQVIERFEPHGSDYPNKFNYNPDLLDDILEKKFKIIMSSIYHKNINIRYLRPRDYLPKIGFQTIENTEININKNIGDPNGFCTLWTIWYLDYRLSYADYDPSKLTRNLINEIRVNNYSFRNIIRNYSKKITDLRDYYLNKINRNINDYLNNRLTVNNTRDILRIIVDDDATVI.

ANK repeat units follow at residues 60–89 (NGNY…RLDV), 93–122 (EGNS…KIIG), 132–161 (KGSV…NANY), 165–194 (DNVN…NLNA), 198–227 (QGST…DQNI), 232–261 (LDFY…NPNH), 265–295 (EGNT…RCRS), 322–353 (DGLT…NLNY), and 357–395 (TGNT…GKTV).

In Acanthamoeba polyphaga mimivirus (APMV), this protein is Putative ankyrin repeat protein L371.